Reading from the N-terminus, the 162-residue chain is MFVPAVVFAALASTSAWANNGDTAQPLEKIAPYPQAEKGMKRQVITLTPQQDESTLKVELLIGQTLNVDCNQHRLGGTLETKTLEGWGYDYYVFDNVTSPVSTMMACPDGKKEQKFVTAWLGEDGMVRYNSKLPIVVYTPANVDVKYRIWKADANVQNAVAR.

The N-terminal stretch at 1-18 is a signal peptide; that stretch reads MFVPAVVFAALASTSAWA. Cysteine 70 and cysteine 107 form a disulfide bridge.

Belongs to the protease inhibitor I11 (ecotin) family. As to quaternary structure, homodimer.

It is found in the periplasm. Functionally, general inhibitor of pancreatic serine proteases: inhibits chymotrypsin, trypsin, elastases, factor X, kallikrein as well as a variety of other proteases. The sequence is that of Ecotin from Salmonella choleraesuis (strain SC-B67).